We begin with the raw amino-acid sequence, 694 residues long: Elongation factor G (694 aa).

A tr-type G domain is found at 9-288; that stretch reads SKIRNIGIMA…VIVKWLPSPK (280 aa). GTP is bound by residues 18–25, 82–86, and 136–139; these read AHIDAGKT, DTPGH, and NKMD.

The protein belongs to the TRAFAC class translation factor GTPase superfamily. Classic translation factor GTPase family. EF-G/EF-2 subfamily.

Its subcellular location is the cytoplasm. Its function is as follows. Catalyzes the GTP-dependent ribosomal translocation step during translation elongation. During this step, the ribosome changes from the pre-translocational (PRE) to the post-translocational (POST) state as the newly formed A-site-bound peptidyl-tRNA and P-site-bound deacylated tRNA move to the P and E sites, respectively. Catalyzes the coordinated movement of the two tRNA molecules, the mRNA and conformational changes in the ribosome. The chain is Elongation factor G from Chlamydia abortus (strain DSM 27085 / S26/3) (Chlamydophila abortus).